A 269-amino-acid polypeptide reads, in one-letter code: 4-hydroxy-tetrahydrodipicolinate reductase (269 aa).

NAD(+) contacts are provided by residues 13-18 and Asp39; that span reads GASGRM. Arg40 lines the NADP(+) pocket. Residues 101 to 103 and 125 to 128 each bind NAD(+); these read GTT and APNM. His158 acts as the Proton donor/acceptor in catalysis. Position 159 (His159) interacts with (S)-2,3,4,5-tetrahydrodipicolinate. Lys162 serves as the catalytic Proton donor. (S)-2,3,4,5-tetrahydrodipicolinate is bound at residue 168–169; it reads GT.

It belongs to the DapB family.

It localises to the cytoplasm. It carries out the reaction (S)-2,3,4,5-tetrahydrodipicolinate + NAD(+) + H2O = (2S,4S)-4-hydroxy-2,3,4,5-tetrahydrodipicolinate + NADH + H(+). The catalysed reaction is (S)-2,3,4,5-tetrahydrodipicolinate + NADP(+) + H2O = (2S,4S)-4-hydroxy-2,3,4,5-tetrahydrodipicolinate + NADPH + H(+). It functions in the pathway amino-acid biosynthesis; L-lysine biosynthesis via DAP pathway; (S)-tetrahydrodipicolinate from L-aspartate: step 4/4. In terms of biological role, catalyzes the conversion of 4-hydroxy-tetrahydrodipicolinate (HTPA) to tetrahydrodipicolinate. The polypeptide is 4-hydroxy-tetrahydrodipicolinate reductase (Bordetella pertussis (strain Tohama I / ATCC BAA-589 / NCTC 13251)).